We begin with the raw amino-acid sequence, 288 residues long: Disulfide-bond oxidoreductase YghU (288 aa).

Glutathione-binding positions include N26, 52–54 (TPN), Q87, I101, 117–118 (ES), Q151, and R178. One can recognise a GST N-terminal domain in the interval 46–133 (QLYSLGTPNG…YLAEKFGYFL (88 aa)). One can recognise a GST C-terminal domain in the interval 139–265 (KRTETMNWLF…RIVNRTNGPL (127 aa)). The disordered stretch occupies residues 260-288 (RTNGPLNEQLHERHDASDFETNTEDKRQG). A compositionally biased stretch (basic and acidic residues) spans 268–288 (QLHERHDASDFETNTEDKRQG).

This sequence belongs to the GST superfamily. Nu-class GSH transferase family. As to quaternary structure, homodimer.

Exhibits a robust glutathione (GSH)-dependent disulfide-bond reductase activity toward the model substrate, 2-hydroxyethyl disulfide; the actual physiological substrates are not known. Also displays a modest GSH-dependent peroxidase activity toward several organic hydroperoxides, such as cumene hydroperoxide and linoleic acid 13(S)-hydroperoxide, but does not reduce H(2)O(2) or tert-butyl hydroperoxide at appreciable rates. Exhibits little or no GSH transferase activity with most typical electrophilic substrates, and has no detectable transferase activity toward 1-chloro-2,4-dinitrobenzene (CDNB) with glutathionylspermidine (GspSH) as the nucleophilic substrate. The sequence is that of Disulfide-bond oxidoreductase YghU (yghU) from Escherichia coli (strain K12).